A 192-amino-acid polypeptide reads, in one-letter code: MAQMYFYYSAMNAGKSTTLLQSSFNYRERGMRPVIFTAAIDDRFGTGKVSSRIGLEEDAELYNKSDDLWSKLSMMHADTHIDCVLIDECQFLTKEQVYQLTEVVDKLHIPVLCYGLRSDFRGELFDGSRYLLSWADKLVELKTICHCGRKANMVIRQDEAGHAIADGDQVEIGGNDRYVSVCRKHYKEALGR.

Residues 9 to 16 (SAMNAGKS) and 87 to 90 (DECQ) each bind ATP. The active-site Proton acceptor is the glutamate 88. The Zn(2+) site is built by cysteine 145, cysteine 147, cysteine 182, and histidine 185.

It belongs to the thymidine kinase family. Homotetramer.

The protein localises to the cytoplasm. It carries out the reaction thymidine + ATP = dTMP + ADP + H(+). The chain is Thymidine kinase from Photobacterium profundum (strain SS9).